The primary structure comprises 457 residues: L-asparaginase-like protein GL17509 (457 aa).

The N-terminal stretch at 1–20 is a signal peptide; that stretch reads MRYLCRAQLLSLLLLPLLKA. 3 cysteine pairs are disulfide-bonded: Cys72-Cys78, Cys172-Cys188, and Cys327-Cys354.

This sequence belongs to the Ntn-hydrolase family.

This Drosophila persimilis (Fruit fly) protein is L-asparaginase-like protein GL17509.